A 163-amino-acid polypeptide reads, in one-letter code: Disulfide bond formation protein B (163 aa).

At 1–9 (MKKLTYRKI) the chain is on the cytoplasmic side. A helical membrane pass occupies residues 10 to 26 (QSFQAIITVLVIFASFY). Topologically, residues 27-44 (LEYAAGLQPCPLCLMQRV) are periplasmic. A disulfide bridge links Cys36 with Cys39. The chain crosses the membrane as a helical span at residues 45–58 (CVFILLGLMGVSLG). Over 59-64 (TVKKAH) the chain is Cytoplasmic. The chain crosses the membrane as a helical span at residues 65-82 (IVSLIQFQVACAGLYFSL). The Periplasmic portion of the chain corresponds to 83–139 (RQLWLQSLPSDQAPACMPGLDVLIQYFPWQTVAKALFWGAGDCAEVTWTMFGVSMPG). Cys98 and Cys125 are oxidised to a cystine. Residues 140-158 (WAAMYFLSMAIMGLFLFFR) traverse the membrane as a helical segment. The Cytoplasmic segment spans residues 159–163 (TRTIN).

The protein belongs to the DsbB family.

The protein resides in the cell inner membrane. In terms of biological role, required for disulfide bond formation in some periplasmic proteins. Acts by oxidizing the DsbA protein. The protein is Disulfide bond formation protein B of Legionella pneumophila (strain Lens).